The sequence spans 66 residues: Large ribosomal subunit protein bL31 (66 aa).

Positions 16, 18, 36, and 39 each coordinate Zn(2+).

The protein belongs to the bacterial ribosomal protein bL31 family. Type A subfamily. Part of the 50S ribosomal subunit. Requires Zn(2+) as cofactor.

Functionally, binds the 23S rRNA. The protein is Large ribosomal subunit protein bL31 of Bacillus licheniformis (strain ATCC 14580 / DSM 13 / JCM 2505 / CCUG 7422 / NBRC 12200 / NCIMB 9375 / NCTC 10341 / NRRL NRS-1264 / Gibson 46).